Here is a 364-residue protein sequence, read N- to C-terminus: Variable large protein 21 (364 aa).

An N-terminal signal peptide occupies residues 1-26 (MRKRISAIINKLNISIMMMIVVLMIG). The N-palmitoyl cysteine moiety is linked to residue cysteine 27. Cysteine 27 carries the S-diacylglycerol cysteine lipid modification.

It belongs to the variable large protein (Vlp) family. Alpha subfamily.

Its subcellular location is the cell outer membrane. Its function is as follows. The Vlp and Vsp proteins are antigenically distinct proteins, only one vlp or vsp gene is transcriptionally active at any one time. Switching between these genes is a mechanism of host immune response evasion. This Borrelia hermsii protein is Variable large protein 21.